Consider the following 273-residue polypeptide: 3-methyl-2-oxobutanoate hydroxymethyltransferase (273 aa).

The Mg(2+) site is built by Asp-53 and Asp-92. 3-methyl-2-oxobutanoate is bound by residues 53-54 (DS), Asp-92, and Lys-122. Residue Glu-124 coordinates Mg(2+). The active-site Proton acceptor is the Glu-191.

It belongs to the PanB family. In terms of assembly, homodecamer; pentamer of dimers. It depends on Mg(2+) as a cofactor.

The protein localises to the cytoplasm. The enzyme catalyses 3-methyl-2-oxobutanoate + (6R)-5,10-methylene-5,6,7,8-tetrahydrofolate + H2O = 2-dehydropantoate + (6S)-5,6,7,8-tetrahydrofolate. It participates in cofactor biosynthesis; (R)-pantothenate biosynthesis; (R)-pantoate from 3-methyl-2-oxobutanoate: step 1/2. Catalyzes the reversible reaction in which hydroxymethyl group from 5,10-methylenetetrahydrofolate is transferred onto alpha-ketoisovalerate to form ketopantoate. The chain is 3-methyl-2-oxobutanoate hydroxymethyltransferase from Porphyromonas gingivalis (strain ATCC 33277 / DSM 20709 / CIP 103683 / JCM 12257 / NCTC 11834 / 2561).